We begin with the raw amino-acid sequence, 613 residues long: Thioredoxin reductase 1, cytoplasmic (613 aa).

Residues 58-121 (AVLPASRPSK…LPTMNGSKDP (64 aa)) form a disordered region. Over residues 65-74 (PSKTLPSSSQ) the composition is skewed to polar residues. FAD contacts are provided by residues 136-137 (SG), 156-157 (DF), 172-173 (TC), and 177-181 (GCIPK). Cys173 and Cys178 are oxidised to a cystine. N6-succinyllysine is present on Lys182. Residue Tyr245 is modified to Phosphotyrosine. Residues 245-246 (YG) and Thr275 each bind FAD. Residues Arg280, 312 to 318 (ASYVALE), 335 to 336 (RS), Arg340, 340 to 342 (RGF), 406 to 407 (GR), and Lys429 each bind NADP(+). Residue Tyr314 coordinates FAD. Residues Asp448, 455 to 457 (ELT), and His586 each bind FAD. Glu455 is an NADP(+) binding site. His586 (proton acceptor) is an active-site residue. Residues 611–612 (CU) constitute a cross-link (cysteinyl-selenocysteine (Cys-Sec)). Residue Sec612 is a non-standard amino acid, selenocysteine.

The protein belongs to the class-I pyridine nucleotide-disulfide oxidoreductase family. In terms of assembly, homodimer. Requires FAD as cofactor. Post-translationally, ISGylated.

It localises to the cytoplasm. The enzyme catalyses [thioredoxin]-dithiol + NADP(+) = [thioredoxin]-disulfide + NADPH + H(+). The catalysed reaction is H2O2 + NADPH + H(+) = NADP(+) + 2 H2O. Reduces disulfideprotein thioredoxin (Trx) to its dithiol-containing form. Homodimeric flavoprotein involved in the regulation of cellular redox reactions, growth and differentiation. Contains a selenocysteine residue at the C-terminal active site that is essential for catalysis. Also has reductase activity on hydrogen peroxide (H2O2). The chain is Thioredoxin reductase 1, cytoplasmic from Mus musculus (Mouse).